The primary structure comprises 86 residues: Small ribosomal subunit protein bS16 (86 aa).

It belongs to the bacterial ribosomal protein bS16 family.

The chain is Small ribosomal subunit protein bS16 from Thermoanaerobacter sp. (strain X514).